We begin with the raw amino-acid sequence, 1097 residues long: Mitochondrial distribution and morphology protein 34 (1097 aa).

The SMP-LTD domain maps to 1 to 198 (MSFNFKWPTF…LPGIIHRLSQ (198 aa)). Disordered regions lie at residues 204–305 (EAKS…PLHS), 317–343 (AAFP…SGFS), 390–427 (QSDD…LDAV), 480–520 (DDQP…TSSL), 556–600 (PEVD…SSRT), 645–675 (LDAE…RDLS), 716–817 (GQNA…SPGV), and 923–1097 (GSSA…AIRE). Residues 205–229 (AKSEKDKVKQKAEAEEPPARSREPT) are compositionally biased toward basic and acidic residues. Residues 252-263 (RKSHSKAKKHSR) are compositionally biased toward basic residues. The span at 274 to 283 (SPCQSPQRPR) shows a compositional bias: low complexity. Residues 284-293 (QSPRRPRHVA) show a composition bias toward basic residues. A compositionally biased stretch (basic and acidic residues) spans 406 to 416 (SSSHDGKHDEG). 2 stretches are compositionally biased toward low complexity: residues 508 to 519 (SSRSDRSACTSS) and 572 to 586 (GGTP…RFGS). Positions 662-675 (TNPTSRESSYRDLS) are enriched in polar residues. Low complexity predominate over residues 759-779 (GMSATPARTRASAAASARSRP). Over residues 784–796 (YATSPPGDSSGWQ) the composition is skewed to polar residues. The span at 923-943 (GSSAASGTGTTSGSSQTGANA) shows a compositional bias: low complexity. Over residues 1004-1024 (SNKPNNTSTGQGEDSQDNSAA) the composition is skewed to polar residues. Residues 1045 to 1059 (ASGSSASSAITDSSS) are compositionally biased toward low complexity.

The protein belongs to the MDM34 family. As to quaternary structure, component of the ER-mitochondria encounter structure (ERMES) or MDM complex, composed of MMM1, MDM10, MDM12 and MDM34.

The protein resides in the mitochondrion outer membrane. In terms of biological role, component of the ERMES/MDM complex, which serves as a molecular tether to connect the endoplasmic reticulum (ER) and mitochondria. Components of this complex are involved in the control of mitochondrial shape and protein biogenesis, and function in nonvesicular lipid trafficking between the ER and mitochondria. MDM34 is required for the interaction of the ER-resident membrane protein MMM1 and the outer mitochondrial membrane-resident beta-barrel protein MDM10. This Mycosarcoma maydis (Corn smut fungus) protein is Mitochondrial distribution and morphology protein 34.